We begin with the raw amino-acid sequence, 410 residues long: Diguanylate cyclase DgcM (410 aa).

2 PAS domains span residues 3–70 and 129–198; these read THNF…NQHD and GFYA…HLPG. Positions 199 to 251 constitute a PAC domain; sequence GHKPLNFVHKLADGSTRHVQTYAGPIEIYGDKLMLCIVHDITEQKRLEEQLEH. Positions 283-410 constitute a GGDEF domain; that stretch reads QDYSLLLIDT…NDGRNRVLAA (128 aa). Mg(2+) is bound at residue Asp-291. Substrate-binding residues include Asn-299, His-304, and Asp-308. Glu-334 contacts Mg(2+). Glu-334 (proton acceptor) is an active-site residue.

As to quaternary structure, forms homodimers and homotetramers. Interacts with PdeR and MlrA. The cofactor is Mg(2+).

The enzyme catalyses 2 GTP = 3',3'-c-di-GMP + 2 diphosphate. It participates in purine metabolism; 3',5'-cyclic di-GMP biosynthesis. Its activity is regulated as follows. Activity is inhibited by the phosphodiesterase PdeR. Inhibition is relieved by high cellular c-di-GMP levels. Its function is as follows. Part of a signaling cascade that regulates curli biosynthesis. The cascade is composed of two cyclic-di-GMP (c-di-GMP) control modules, in which c-di-GMP controlled by the DgcE/PdeH pair (module I) regulates the activity of the DgcM/PdeR pair (module II), which in turn regulates activity of the transcription factor MlrA and expression of the master biofilm regulator csgD. DgcM stimulates activity of MlrA by direct interaction, leading to the transcription of csgD. It also catalyzes the synthesis of c-di-GMP via the condensation of 2 GTP molecules, which contributes to the c-di-GMP pool generated by module I in a positive feedback loop. Production of c-di-GMP contributes to but is not essential for MlrA activation. The chain is Diguanylate cyclase DgcM from Escherichia coli (strain K12).